Here is a 669-residue protein sequence, read N- to C-terminus: Myb-like protein M (669 aa).

Residues 27-69 are disordered; the sequence is DPSLMDDEFSDNEYDLSPKDDVPSPSKRGRGQIQNGIRRSPNK. Positions 30–40 are enriched in acidic residues; it reads LMDDEFSDNEY. 2 consecutive HTH myb-type domains span residues 60 to 118 and 119 to 170; these read QNGI…SPDI and RKGP…SREV. 2 consecutive DNA-binding regions (H-T-H motif) follow at residues 90–114 and 142–166; these read WKRI…KRVL and WKKI…KSLQ. Residues 172 to 223 enclose the Myb-like domain; sequence WVPKEDEVLVKKVDEMGENLSWLEVSEYLAKLKHTNTLRTALECKTRYLQLT. 2 disordered regions span residues 226-530 and 550-636; these read GGSI…EDNG and IKNK…PHQS. 3 stretches are compositionally biased toward low complexity: residues 234 to 382, 389 to 415, and 450 to 464; these read NQSN…SSPS, NNNN…NSNN, and PTSL…SSPS. Polar residues predominate over residues 465-482; it reads CNNSIRQPSPSPSIKTFK. Low complexity-rich tracts occupy residues 483–521, 555–593, and 611–636; these read STIV…NNDN, NNNN…NSDN, and SNFK…PHQS.

Its subcellular location is the nucleus. The protein is Myb-like protein M (mybM) of Dictyostelium discoideum (Social amoeba).